The primary structure comprises 180 residues: Large ribosomal subunit protein bL19 (180 aa).

It belongs to the bacterial ribosomal protein bL19 family.

Its function is as follows. This protein is located at the 30S-50S ribosomal subunit interface and may play a role in the structure and function of the aminoacyl-tRNA binding site. This is Large ribosomal subunit protein bL19 from Allorhizobium ampelinum (strain ATCC BAA-846 / DSM 112012 / S4) (Agrobacterium vitis (strain S4)).